The chain runs to 285 residues: Sulfotransferase 2A1 (285 aa).

6 residues coordinate 3'-phosphoadenylyl sulfate: Lys44, Ser45, Gly46, Thr47, Asn48, and Trp49. Catalysis depends on His99, which acts as the Proton acceptor. 3'-phosphoadenylyl sulfate-binding residues include Arg121, Ser129, Tyr184, Ser218, Met223, Arg247, Lys248, and Gly249. The residue at position 251 (Ser251) is a Phosphoserine.

It belongs to the sulfotransferase 1 family. In terms of assembly, homodimer. Predominanly expressed in liver. Detected also in adrenal gland and in jejunum.

It is found in the cytoplasm. The protein resides in the cytosol. The catalysed reaction is an alcohol + 3'-phosphoadenylyl sulfate = an alkyl sulfate + adenosine 3',5'-bisphosphate + H(+). It catalyses the reaction 3beta-hydroxyandrost-5-en-17-one + 3'-phosphoadenylyl sulfate = dehydroepiandrosterone 3-sulfate + adenosine 3',5'-bisphosphate + H(+). It carries out the reaction taurolithocholate + 3'-phosphoadenylyl sulfate = taurolithocholate 3-sulfate + adenosine 3',5'-bisphosphate + H(+). The enzyme catalyses lithocholate + 3'-phosphoadenylyl sulfate = lithocholate sulfate + adenosine 3',5'-bisphosphate + H(+). The catalysed reaction is (24S)-hydroxycholesterol + 3'-phosphoadenylyl sulfate = (24S)-hydroxycholesterol 24-sulfate + adenosine 3',5'-bisphosphate + H(+). It catalyses the reaction (24S)-hydroxycholesterol + 3'-phosphoadenylyl sulfate = (24S)-hydroxycholesterol 3-sulfate + adenosine 3',5'-bisphosphate + H(+). It carries out the reaction (24S)-hydroxycholesterol 24-sulfate + 3'-phosphoadenylyl sulfate = (24S)-hydroxycholesterol 3,24-disulfate + adenosine 3',5'-bisphosphate + H(+). The enzyme catalyses pregnenolone + 3'-phosphoadenylyl sulfate = pregnenolone sulfate + adenosine 3',5'-bisphosphate + H(+). The catalysed reaction is androsterone + 3'-phosphoadenylyl sulfate = androsterone 3alpha-sulfate + adenosine 3',5'-bisphosphate + H(+). Functionally, sulfotransferase that utilizes 3'-phospho-5'-adenylyl sulfate (PAPS) as sulfonate donor to catalyze the sulfonation of steroids and bile acids in the liver and adrenal glands. Mediates the sulfation of a wide range of steroids and sterols, including pregnenolone, androsterone, DHEA, bile acids, cholesterol and as well many xenobiotics that contain alcohol and phenol functional groups. Sulfonation increases the water solubility of most compounds, and therefore their renal excretion, but it can also result in bioactivation to form active metabolites. Plays an important role in maintening steroid and lipid homeostasis. Plays a key role in bile acid metabolism. In addition, catalyzes the metabolic activation of potent carcinogenic polycyclic arylmethanols. This is Sulfotransferase 2A1 (SULT2A1) from Macaca fascicularis (Crab-eating macaque).